We begin with the raw amino-acid sequence, 465 residues long: uncharacterized protein (465 aa).

3 disordered regions span residues 95-173, 407-426, and 443-465; these read STST…RKDP, QEME…KSDK, and ANPI…SSKK. The span at 118–137 shows a compositional bias: basic residues; it reads KTGSKKVTRSKKSKKTKRRS. The span at 138-150 shows a compositional bias: low complexity; sequence STTVTTTTISNSK. Over residues 153-173 the composition is skewed to basic and acidic residues; sequence TPDKDKDSKDQRKQRTKRKDP. The segment covering 451 to 465 has biased composition (basic residues); sequence MARRNRRSKGSSSKK.

This is an uncharacterized protein from Caenorhabditis elegans.